A 430-amino-acid polypeptide reads, in one-letter code: Histidine--tRNA ligase (430 aa).

This sequence belongs to the class-II aminoacyl-tRNA synthetase family. Homodimer.

The protein localises to the cytoplasm. The enzyme catalyses tRNA(His) + L-histidine + ATP = L-histidyl-tRNA(His) + AMP + diphosphate + H(+). This Synechococcus sp. (strain CC9902) protein is Histidine--tRNA ligase.